The sequence spans 129 residues: Mini-ribonuclease 3-like protein (129 aa).

Residue aspartate 23 is part of the active site.

This sequence belongs to the MrnC RNase family.

Might be a ribonuclease involved in RNA processing. This Fusobacterium nucleatum subsp. nucleatum (strain ATCC 25586 / DSM 15643 / BCRC 10681 / CIP 101130 / JCM 8532 / KCTC 2640 / LMG 13131 / VPI 4355) protein is Mini-ribonuclease 3-like protein (mrnCL).